The primary structure comprises 421 residues: Proton/sodium-glutamate symport protein (421 aa).

Residues Met1–Lys3 lie on the Cytoplasmic side of the membrane. The helical transmembrane segment at Ile4–Phe24 threads the bilayer. The Extracellular segment spans residues Tyr25 to Arg43. A helical membrane pass occupies residues Leu44–Val64. Topologically, residues Gly65–Thr77 are cytoplasmic. Residues Ile78–Ile98 traverse the membrane as a helical segment. Residues Phe99–Lys148 are Extracellular-facing. The chain crosses the membrane as a helical span at residues Gly149–Gly169. Residues Glu170 to Pro198 are Cytoplasmic-facing. A helical transmembrane segment spans residues Phe199–Pro219. The Extracellular segment spans residues Leu220 to Lys222. The chain crosses the membrane as a helical span at residues Leu223–Ala243. Lys244 is a topological domain (cytoplasmic). Residues Leu245–Tyr265 traverse the membrane as a helical segment. Residues Ser266–Ser306 are Extracellular-facing. A helical membrane pass occupies residues Thr307–Ile327. The Cytoplasmic segment spans residues Ser328 to Gln330. 2 helical membrane-spanning segments follow: residues Ile331–Ser351 and Phe352–Ile372. Over Ala373–Ala421 the chain is Cytoplasmic.

Belongs to the dicarboxylate/amino acid:cation symporter (DAACS) (TC 2.A.23) family. In terms of assembly, homotrimer.

The protein resides in the cell membrane. Its function is as follows. This carrier protein is part of the Na(+)-dependent, binding-protein-independent glutamate-aspartate transport system. The chain is Proton/sodium-glutamate symport protein (gltT) from Geobacillus stearothermophilus (Bacillus stearothermophilus).